Consider the following 169-residue polypeptide: Small ribosomal subunit protein uS5 (169 aa).

In terms of domain architecture, S5 DRBM spans 14–77 (LQEKVVEVRR…EDAKKNLIVV (64 aa)).

Belongs to the universal ribosomal protein uS5 family. Part of the 30S ribosomal subunit. Contacts proteins S4 and S8.

With S4 and S12 plays an important role in translational accuracy. Its function is as follows. Located at the back of the 30S subunit body where it stabilizes the conformation of the head with respect to the body. The polypeptide is Small ribosomal subunit protein uS5 (Clostridioides difficile (strain 630) (Peptoclostridium difficile)).